Reading from the N-terminus, the 361-residue chain is Trans-2,3-enoyl-CoA reductase-like (361 aa).

Phosphoserine is present on residues Ser-33 and Ser-35. Helical transmembrane passes span 139–159, 181–201, 215–235, and 309–329; these read VGWT…YLLF, VHLA…ETLF, LIKG…YINH, and ISFT…LMTI.

Belongs to the steroid 5-alpha reductase family. Expression is highest in the heart with very low to almost undetectable levels in brain, skeletal muscle, stomach, pancreas, liver, kidney, small intestine, and uterus.

It is found in the membrane. The protein localises to the endoplasmic reticulum. This chain is Trans-2,3-enoyl-CoA reductase-like (Tecrl), found in Mus musculus (Mouse).